We begin with the raw amino-acid sequence, 369 residues long: Isopentenyl-diphosphate delta-isomerase (369 aa).

Arg-9–Lys-10 serves as a coordination point for substrate. FMN is bound by residues Thr-65, Gly-66–Thr-68, Ser-96, and Asn-125. Residue Ser-96–Arg-98 participates in substrate binding. Gln-160 is a substrate binding site. Glu-161 contacts Mg(2+). FMN contacts are provided by residues Lys-193, Ser-218, Thr-223, Gly-275 to Arg-277, and Ala-296 to Leu-297.

Belongs to the IPP isomerase type 2 family. As to quaternary structure, homooctamer. Dimer of tetramers. The cofactor is FMN. Requires NADPH as cofactor. It depends on Mg(2+) as a cofactor.

The protein resides in the cytoplasm. The enzyme catalyses isopentenyl diphosphate = dimethylallyl diphosphate. Its function is as follows. Involved in the biosynthesis of isoprenoids. Catalyzes the 1,3-allylic rearrangement of the homoallylic substrate isopentenyl (IPP) to its allylic isomer, dimethylallyl diphosphate (DMAPP). The polypeptide is Isopentenyl-diphosphate delta-isomerase (Sulfurisphaera tokodaii (strain DSM 16993 / JCM 10545 / NBRC 100140 / 7) (Sulfolobus tokodaii)).